The sequence spans 354 residues: Tetraacyldisaccharide 4'-kinase (354 aa).

Residue 53-60 participates in ATP binding; the sequence is AWGGTGKT.

The protein belongs to the LpxK family.

The enzyme catalyses a lipid A disaccharide + ATP = a lipid IVA + ADP + H(+). Its pathway is glycolipid biosynthesis; lipid IV(A) biosynthesis; lipid IV(A) from (3R)-3-hydroxytetradecanoyl-[acyl-carrier-protein] and UDP-N-acetyl-alpha-D-glucosamine: step 6/6. Its function is as follows. Transfers the gamma-phosphate of ATP to the 4'-position of a tetraacyldisaccharide 1-phosphate intermediate (termed DS-1-P) to form tetraacyldisaccharide 1,4'-bis-phosphate (lipid IVA). This Nitratidesulfovibrio vulgaris (strain ATCC 29579 / DSM 644 / CCUG 34227 / NCIMB 8303 / VKM B-1760 / Hildenborough) (Desulfovibrio vulgaris) protein is Tetraacyldisaccharide 4'-kinase.